The sequence spans 278 residues: Inositol oxygenase (278 aa).

Substrate-binding positions include R22 and 78–80 (DES). Fe cation-binding residues include H91, H116, and D117. Residues K120 and 134-135 (GD) each bind substrate. Residues H187, H213, and D246 each contribute to the Fe cation site. Substrate is bound at residue 213 to 214 (HS).

Belongs to the myo-inositol oxygenase family. It depends on Fe cation as a cofactor.

The protein resides in the cytoplasm. It carries out the reaction myo-inositol + O2 = D-glucuronate + H2O + H(+). It participates in polyol metabolism; myo-inositol degradation into D-glucuronate; D-glucuronate from myo-inositol: step 1/1. The protein is Inositol oxygenase (miox) of Danio rerio (Zebrafish).